The sequence spans 523 residues: Nondiscriminating glutamyl-tRNA synthetase EARS2, mitochondrial (523 aa).

Residues 1–41 constitute a mitochondrion transit peptide; that stretch reads MAALLRRLLQRERPSAASGRPVGRREANLGTDAGVAVRVRF. 40-42 contributes to the L-glutamate binding site; it reads RFA. Positions 45–53 match the 'HIGH' region motif; sequence PTGFLHLGG. An ATP-binding site is contributed by histidine 50. L-glutamate is bound by residues glutamate 76, 228-232, and arginine 246; that span reads YHLAC. Glutamate 249 contributes to the ATP binding site. At lysine 256 the chain carries N6-succinyllysine. 284 to 288 contacts ATP; that stretch reads KLSKR. The 'KMSKS' region signature appears at 284–288; it reads KLSKR. At lysine 486 the chain carries N6-acetyllysine.

Belongs to the class-I aminoacyl-tRNA synthetase family. Glutamate--tRNA ligase type 1 subfamily.

It is found in the mitochondrion matrix. The enzyme catalyses tRNA(Glx) + L-glutamate + ATP = L-glutamyl-tRNA(Glx) + AMP + diphosphate. It carries out the reaction tRNA(Glu) + L-glutamate + ATP = L-glutamyl-tRNA(Glu) + AMP + diphosphate. The catalysed reaction is tRNA(Gln) + L-glutamate + ATP = L-glutamyl-tRNA(Gln) + AMP + diphosphate. Non-discriminating glutamyl-tRNA synthetase that catalyzes aminoacylation of both mitochondrial tRNA(Glu) and tRNA(Gln) and participates in RNA aminoacylation for mitochondrial protein translation. Attachs glutamate to tRNA(Glu) or tRNA(Gln) in a two-step reaction: glutamate is first activated by ATP to form Glu-AMP and then transferred to the acceptor end of tRNA(Glu) or tRNA(Gln). In vitro, cytoplasmic tRNA(Gln) is slightly glutamylated, but with low activity. This is Nondiscriminating glutamyl-tRNA synthetase EARS2, mitochondrial from Homo sapiens (Human).